The sequence spans 418 residues: Putative competence-damage inducible protein (418 aa).

Belongs to the CinA family.

The protein is Putative competence-damage inducible protein of Streptococcus pneumoniae (strain JJA).